The primary structure comprises 416 residues: Transmembrane protease serine 11B-like protein (416 aa).

The Cytoplasmic segment spans residues 1–15 (MYRPVIASRKSIPPW). The chain crosses the membrane as a helical; Signal-anchor for type II membrane protein span at residues 16 to 36 (LIILCVLGVLAALGIIIGLLV). The Extracellular portion of the chain corresponds to 37-416 (HFLAVENKIY…RNWIASKTGI (380 aa)). The 118-residue stretch at 44–161 (KIYYYQGGFK…GSLKLTEISK (118 aa)) folds into the SEA domain. The N-linked (GlcNAc...) asparagine glycan is linked to Asn107. One can recognise a Peptidase S1 domain in the interval 185–415 (ITGGSTAHKG…YRNWIASKTG (231 aa)). An intrachain disulfide couples Cys210 to Cys226. His225 acts as the Charge relay system in catalysis. An N-linked (GlcNAc...) asparagine glycan is attached at Asn235. Asp270 serves as the catalytic Charge relay system. 2 cysteine pairs are disulfide-bonded: Cys335–Cys351 and Cys362–Cys391. Catalysis depends on Ser366, which acts as the Charge relay system.

Belongs to the peptidase S1 family. As to expression, expressed in esophagus, cervix, tongue, and testes.

Its subcellular location is the cell membrane. Its activity is regulated as follows. Inhibited by aprotinin, leupeptin, benzamidine, SERPINA1, SPINT1 and SPINT2. In terms of biological role, serine protease. The polypeptide is Transmembrane protease serine 11B-like protein (Tmprss11b) (Mus musculus (Mouse)).